A 352-amino-acid polypeptide reads, in one-letter code: DNA polymerase IV (352 aa).

The UmuC domain maps to 4-185; that stretch reads IIHVDMDCFF…LPLSKIPGVG (182 aa). Residues Asp8 and Asp103 each coordinate Mg(2+). Glu104 is an active-site residue.

Belongs to the DNA polymerase type-Y family. In terms of assembly, monomer. Mg(2+) serves as cofactor.

Its subcellular location is the cytoplasm. It catalyses the reaction DNA(n) + a 2'-deoxyribonucleoside 5'-triphosphate = DNA(n+1) + diphosphate. Functionally, poorly processive, error-prone DNA polymerase involved in untargeted mutagenesis. Copies undamaged DNA at stalled replication forks, which arise in vivo from mismatched or misaligned primer ends. These misaligned primers can be extended by PolIV. Exhibits no 3'-5' exonuclease (proofreading) activity. May be involved in translesional synthesis, in conjunction with the beta clamp from PolIII. The chain is DNA polymerase IV from Enterobacter sp. (strain 638).